A 364-amino-acid polypeptide reads, in one-letter code: TD and POZ domain-containing protein 2 (364 aa).

Positions 19-149 constitute an MATH domain; that stretch reads EFCYEWTISN…KDKLTLCCKV (131 aa). One can recognise a BTB domain in the interval 188-255; that stretch reads TDCSLLVAGH…IYTGKAPTLH (68 aa).

This sequence belongs to the Tdpoz family.

The chain is TD and POZ domain-containing protein 2 from Mus musculus (Mouse).